The sequence spans 322 residues: Crystallin J1B (322 aa).

Belongs to the ADP-ribosylglycohydrolase family. J1 crystallin subfamily. In terms of tissue distribution, expressed in the rhopalia. Present in both the large and small eyes.

The polypeptide is Crystallin J1B (Tripedalia cystophora (Jellyfish)).